Reading from the N-terminus, the 333-residue chain is 4-hydroxy-3-methylbut-2-enyl diphosphate reductase (333 aa).

Cysteine 20 is a binding site for [4Fe-4S] cluster. Residues histidine 49 and histidine 85 each contribute to the (2E)-4-hydroxy-3-methylbut-2-enyl diphosphate site. Positions 49 and 85 each coordinate dimethylallyl diphosphate. Residues histidine 49 and histidine 85 each coordinate isopentenyl diphosphate. Residue cysteine 107 coordinates [4Fe-4S] cluster. Residue histidine 135 coordinates (2E)-4-hydroxy-3-methylbut-2-enyl diphosphate. Position 135 (histidine 135) interacts with dimethylallyl diphosphate. Histidine 135 contacts isopentenyl diphosphate. Glutamate 137 serves as the catalytic Proton donor. (2E)-4-hydroxy-3-methylbut-2-enyl diphosphate is bound at residue threonine 176. Cysteine 206 contributes to the [4Fe-4S] cluster binding site. The (2E)-4-hydroxy-3-methylbut-2-enyl diphosphate site is built by serine 234, serine 235, asparagine 236, and serine 279. Serine 234, serine 235, asparagine 236, and serine 279 together coordinate dimethylallyl diphosphate. The isopentenyl diphosphate site is built by serine 234, serine 235, asparagine 236, and serine 279.

It belongs to the IspH family. Requires [4Fe-4S] cluster as cofactor.

The catalysed reaction is isopentenyl diphosphate + 2 oxidized [2Fe-2S]-[ferredoxin] + H2O = (2E)-4-hydroxy-3-methylbut-2-enyl diphosphate + 2 reduced [2Fe-2S]-[ferredoxin] + 2 H(+). The enzyme catalyses dimethylallyl diphosphate + 2 oxidized [2Fe-2S]-[ferredoxin] + H2O = (2E)-4-hydroxy-3-methylbut-2-enyl diphosphate + 2 reduced [2Fe-2S]-[ferredoxin] + 2 H(+). The protein operates within isoprenoid biosynthesis; dimethylallyl diphosphate biosynthesis; dimethylallyl diphosphate from (2E)-4-hydroxy-3-methylbutenyl diphosphate: step 1/1. Its pathway is isoprenoid biosynthesis; isopentenyl diphosphate biosynthesis via DXP pathway; isopentenyl diphosphate from 1-deoxy-D-xylulose 5-phosphate: step 6/6. Functionally, catalyzes the conversion of 1-hydroxy-2-methyl-2-(E)-butenyl 4-diphosphate (HMBPP) into a mixture of isopentenyl diphosphate (IPP) and dimethylallyl diphosphate (DMAPP). Acts in the terminal step of the DOXP/MEP pathway for isoprenoid precursor biosynthesis. This Rhizobium johnstonii (strain DSM 114642 / LMG 32736 / 3841) (Rhizobium leguminosarum bv. viciae) protein is 4-hydroxy-3-methylbut-2-enyl diphosphate reductase.